The chain runs to 386 residues: N-acetylneuraminate epimerase (386 aa).

A signal peptide spans 1–29 (MGMQMKNFKKMMTLMALCLSVAITTSGYA). 7 Kelch repeats span residues 51 to 95 (VIYV…VFLN), 97 to 149 (ELYV…VKLN), 151 to 186 (TMVLITGGVNEHIFDKYFIDIAAAAADESEKNKVIY), 187 to 232 (NYFN…VMEN), 235 to 284 (LMLI…LAGA), 306 to 355 (QNYT…SYGD), and 357 to 386 (VFLIGGENAKGKPVSSVTSFTMRDGNLLIK). Catalysis depends on Glu-241, which acts as the Proton acceptor.

It belongs to the NanM family. Homodimer.

Its subcellular location is the periplasm. It carries out the reaction N-acetyl-alpha-neuraminate = N-acetyl-beta-neuraminate. Functionally, converts alpha-N-acetylneuranimic acid (Neu5Ac) to the beta-anomer, accelerating the equilibrium between the alpha- and beta-anomers. Probably facilitates sialidase-negative bacteria to compete successfully for limited amounts of extracellular Neu5Ac, which is likely taken up in the beta-anomer. In addition, the rapid removal of sialic acid from solution might be advantageous to the bacterium to damp down host responses. The polypeptide is N-acetylneuraminate epimerase (Salmonella choleraesuis (strain SC-B67)).